Here is a 441-residue protein sequence, read N- to C-terminus: MKAREVNFDGLVGLTHHYAGLSFGNEASTKHRFQVSNPKLAARQGLAKMKALADAGFPQAVIPPQERPNLAALRQIGFTGSDQQVLEKAWRAAPHLLSAASSASSMWVANAATVCPSADALDGKVHLTVANLNNKFHRASEAPGTERLLRAIFRDESRFAVHGALPQVAMFGDEGAANHNRLGGDYGEPGLQLFIYGREESGALVPARYPARQTLEASQAVARLNQVDPQRVMFAQQNPAVIDQGVFHNDVIAVSNRQVLFCHEHAFLHQQALFDALAEKVPGFTPLVVPAGAVSVQDAVETYLFNSQLLSRDDGTMVLVLPEESRRHEGVWRYLNTLVAADNPISELKVFDLRESMANGGGPACLRLRVVLTDDERQAVNPAVMMDDTLFTRLNAWVDKYYRDRLTQEDLVDPQLLREGREALDELSRLLSLGNVYPFQQ.

Residues 19 to 28 (AGLSFGNEAS), asparagine 110, and 137 to 138 (HR) each bind substrate. Glutamate 174 is an active-site residue. Position 212 (arginine 212) interacts with substrate. Residue histidine 248 is part of the active site. Aspartate 250 and asparagine 359 together coordinate substrate. The Nucleophile role is filled by cysteine 365.

This sequence belongs to the succinylarginine dihydrolase family. As to quaternary structure, homodimer.

It catalyses the reaction N(2)-succinyl-L-arginine + 2 H2O + 2 H(+) = N(2)-succinyl-L-ornithine + 2 NH4(+) + CO2. It participates in amino-acid degradation; L-arginine degradation via AST pathway; L-glutamate and succinate from L-arginine: step 2/5. Catalyzes the hydrolysis of N(2)-succinylarginine into N(2)-succinylornithine, ammonia and CO(2). The protein is N-succinylarginine dihydrolase of Cronobacter sakazakii (strain ATCC BAA-894) (Enterobacter sakazakii).